The following is a 56-amino-acid chain: uncharacterized protein (56 aa).

This is an uncharacterized protein from Thermoproteus tenax virus 1 (strain KRA1) (TTV1).